Consider the following 206-residue polypeptide: N-(5'-phosphoribosyl)anthranilate isomerase (206 aa).

This sequence belongs to the TrpF family.

The enzyme catalyses N-(5-phospho-beta-D-ribosyl)anthranilate = 1-(2-carboxyphenylamino)-1-deoxy-D-ribulose 5-phosphate. Its pathway is amino-acid biosynthesis; L-tryptophan biosynthesis; L-tryptophan from chorismate: step 3/5. The sequence is that of N-(5'-phosphoribosyl)anthranilate isomerase from Pseudomonas putida (strain W619).